The sequence spans 125 residues: Small ribosomal subunit protein uS12 (125 aa).

The disordered stretch occupies residues Met-1–Asn-26. A 3-methylthioaspartic acid modification is found at Asp-89.

Belongs to the universal ribosomal protein uS12 family. In terms of assembly, part of the 30S ribosomal subunit. Contacts proteins S8 and S17. May interact with IF1 in the 30S initiation complex.

Its function is as follows. With S4 and S5 plays an important role in translational accuracy. Functionally, interacts with and stabilizes bases of the 16S rRNA that are involved in tRNA selection in the A site and with the mRNA backbone. Located at the interface of the 30S and 50S subunits, it traverses the body of the 30S subunit contacting proteins on the other side and probably holding the rRNA structure together. The combined cluster of proteins S8, S12 and S17 appears to hold together the shoulder and platform of the 30S subunit. This Clostridium tetani (strain Massachusetts / E88) protein is Small ribosomal subunit protein uS12.